Reading from the N-terminus, the 125-residue chain is UPF0389 protein CG9231 (125 aa).

A helical membrane pass occupies residues 69–88; sequence IRLANIMIALTAVGCAIMVY. Asn-112 is a glycosylation site (N-linked (GlcNAc...) asparagine).

Belongs to the UPF0389 family.

Its subcellular location is the membrane. This Drosophila melanogaster (Fruit fly) protein is UPF0389 protein CG9231.